The sequence spans 268 residues: Phosphate import ATP-binding protein PstB (268 aa).

In terms of domain architecture, ABC transporter spans 22–263 (LAVRNLNFYY…PKQQQTQDYI (242 aa)). 54 to 61 (GPSGCGKS) is an ATP binding site.

Belongs to the ABC transporter superfamily. Phosphate importer (TC 3.A.1.7) family. As to quaternary structure, the complex is composed of two ATP-binding proteins (PstB), two transmembrane proteins (PstC and PstA) and a solute-binding protein (PstS).

Its subcellular location is the cell inner membrane. The enzyme catalyses phosphate(out) + ATP + H2O = ADP + 2 phosphate(in) + H(+). In terms of biological role, part of the ABC transporter complex PstSACB involved in phosphate import. Responsible for energy coupling to the transport system. This Gluconobacter oxydans (strain 621H) (Gluconobacter suboxydans) protein is Phosphate import ATP-binding protein PstB.